The primary structure comprises 214 residues: Adenylate kinase (214 aa).

10 to 15 contacts ATP; it reads GAGKGT. Positions 30 to 59 are NMP; sequence STGDMLRAAIKAGTELGKQAKSVIDAGQLV. AMP is bound by residues Thr31, Arg36, 57 to 59, 85 to 88, and Gln92; these read QLV and GFPR. The tract at residues 122-159 is LID; sequence GRRAHLPSGRTYHVVYNPPKEEGKDDETGEPLVIREDD. ATP is bound by residues Arg123 and 132-133; that span reads TY. AMP contacts are provided by Arg156 and Arg167. Lys200 contacts ATP.

This sequence belongs to the adenylate kinase family. In terms of assembly, monomer.

It is found in the cytoplasm. It catalyses the reaction AMP + ATP = 2 ADP. The protein operates within purine metabolism; AMP biosynthesis via salvage pathway; AMP from ADP: step 1/1. Catalyzes the reversible transfer of the terminal phosphate group between ATP and AMP. Plays an important role in cellular energy homeostasis and in adenine nucleotide metabolism. The chain is Adenylate kinase from Aliivibrio fischeri (strain ATCC 700601 / ES114) (Vibrio fischeri).